Here is a 155-residue protein sequence, read N- to C-terminus: MKISLIAVGTRMPAWVQDGYQEYAKRLPKELTPELVELPLAVRSKSTNTQNAIASEGDNMLKHIGSNTRTIALDVLGKSFSTEVLSQKLADWQMDGRNVNILIGGPDGLDSRCLAQADEKWSLSALTLPHPLVRVLLIEQLYRAWTILQNHPYHK.

S-adenosyl-L-methionine is bound by residues Leu-73, Gly-104, and 123 to 128 (LSALTL).

The protein belongs to the RNA methyltransferase RlmH family. Homodimer.

It is found in the cytoplasm. It carries out the reaction pseudouridine(1915) in 23S rRNA + S-adenosyl-L-methionine = N(3)-methylpseudouridine(1915) in 23S rRNA + S-adenosyl-L-homocysteine + H(+). In terms of biological role, specifically methylates the pseudouridine at position 1915 (m3Psi1915) in 23S rRNA. The sequence is that of Ribosomal RNA large subunit methyltransferase H from Saccharophagus degradans (strain 2-40 / ATCC 43961 / DSM 17024).